A 196-amino-acid polypeptide reads, in one-letter code: Calcium channel flower (196 aa).

Helical transmembrane passes span 36 to 56 (LGIV…LSII), 67 to 89 (IIQM…ICIE), and 114 to 134 (AVPP…GLIF).

This sequence belongs to the calcium channel flower family. Homomultimer. Associates with the dally/ magu complex.

The protein resides in the cell membrane. It is found in the cytoplasmic vesicle. It localises to the secretory vesicle. The protein localises to the synaptic vesicle membrane. Its subcellular location is the presynaptic cell membrane. The protein resides in the endosome. Its activity is regulated as follows. Channel activity is inhibited by La(3+), which reduces Ca(2+) influx and thus inhibits it's function in promoting activity-dependent bulk endocytosis (ADBE) in response to high stimuli. Transmembrane protein which mediates synaptic endocytosis, fitness-based cell culling, neuronal culling, morphogen gradient scaling, and calcium transport. Regulates synaptic endocytosis and hence couples exo- with endocytosis. Controls two major modes of synaptic vesicle (SV) endocytosis in the synaptic boutons of neuromuscular junctions (NMJs); Ca(2+) channel-independent Clathrin-mediated endocytosis (CME) in response to mild stimulation, and Ca(2+) channel-dependent activity-dependent bulk endocytosis (ADBE) in response to strong stimulation. Functions in ADBE and subsequent SV reformation from bulk endosomes by initiating Ca(2+) channel-dependent phosphatidylinositol 4,5-bisphosphate (PtdIns(4,5)P2) compartmentalization in synaptic boutons. There it acts at the periactive zone to provide the low Ca(2+) levels required to initiate Calcineurin activation and upregulate PtdIns(4,5)P2. Conversely PtdIns(4,5)P2 enhances fwe Ca(2+) channel-activity, establishing a positive feedback loop that induces PtdIns(4,5)P2 microdomain at the periactive zone. These microdomains trigger bulk membrane invagination (i.e. ADBE) by triggering actin polymerization while also promoting localization of fwe to bulk endosomes, thereby removing the ADBE trigger to reduce endocytosis and prevent excess membrane uptake. PtdIns(4,5)P2 then promotes SV reformation from the bulk endosomes, to coordinate ADBE and subsequent SV reformation. Different combinations of the flower isoforms at the cell membrane are also required for the identification and elimination of suboptimal or supernumerary cells during development, regeneration, and adulthood. Required for the recognition and elimination of unfit cells in the developing wing during cell competition. In the developing pupal retina, mediates the elimination of unwanted postmitotic neurons, including supernumerary photoreceptor neurons that form at the periphery of the retina and are contained within incomplete ommatidia units. Also required for efficient elimination and replacement of old neurons by newly generated neurons during regeneration in the adult brain following mechanical injury. Downstream of the flower fitness fingerprints, cells identified as unwanted or unfit are eliminated via apoptosis through the expression of ahuizotl (azot). However, the cells marked for elimination by the flower isoforms only undergo apoptosis if additional thresholds are met; (1) their neighboring fit/healthy cells express different levels of the fwe isoforms, and (2) the levels of the protective signal SPARC expressed by the loser or unwanted cells are unable to inhibit caspase activation. These additional thresholds for flower-mediated apoptosis, allows useful cells to recover from transient and limited stress before they are unnecessarily eliminated. Functions with dally and magu in a mechanism of scaling, which utilises apoptosis to ensure that the dpp morphogen gradient, which mediates organ growth, remains proportional to the size of the growing wing. In this mechanism, fwe represses dally- and Magu-dependent activity in expanding the gradient, and dally/Magu inhibits fwe-dependent apoptosis to keep cell death rate low. When the levels of these different proteins are optimally regulated the gradient correctly scales with organ growth but when this fails, fwe-mediated apoptosis is activated to trim the developing tissue to match the correct size of the gradient. The protein is Calcium channel flower of Drosophila virilis (Fruit fly).